A 159-amino-acid chain; its full sequence is Endoribonuclease YbeY (159 aa).

Positions 122, 126, and 132 each coordinate Zn(2+).

Belongs to the endoribonuclease YbeY family. Requires Zn(2+) as cofactor.

Its subcellular location is the cytoplasm. Its function is as follows. Single strand-specific metallo-endoribonuclease involved in late-stage 70S ribosome quality control and in maturation of the 3' terminus of the 16S rRNA. This Roseiflexus castenholzii (strain DSM 13941 / HLO8) protein is Endoribonuclease YbeY.